Here is a 248-residue protein sequence, read N- to C-terminus: Glutamine-binding periplasmic protein (248 aa).

Positions 1 to 22 (MKSVLKVSLAALTLAFAVSSHA) are cleaved as a signal peptide.

It belongs to the bacterial solute-binding protein 3 family.

The protein localises to the periplasm. Its function is as follows. Involved in a glutamine-transport system GlnHPQ. The protein is Glutamine-binding periplasmic protein (glnH) of Escherichia coli O157:H7.